Here is a 129-residue protein sequence, read N- to C-terminus: MVESSSSKTKFAQAHGRYIRGSASKVRRVLDQIRGRTYRDALIMLEFMPYRSTGPITKVLRSAVANAENNMGLDPASLVITRATADMAPSMKRYRPRAQGRAFAIKKQTCHISISVAPSSESTNSEASD.

It belongs to the universal ribosomal protein uL22 family. As to quaternary structure, part of the 50S ribosomal subunit.

Its function is as follows. This protein binds specifically to 23S rRNA; its binding is stimulated by other ribosomal proteins, e.g. L4, L17, and L20. It is important during the early stages of 50S assembly. It makes multiple contacts with different domains of the 23S rRNA in the assembled 50S subunit and ribosome. Functionally, the globular domain of the protein is located near the polypeptide exit tunnel on the outside of the subunit, while an extended beta-hairpin is found that lines the wall of the exit tunnel in the center of the 70S ribosome. The chain is Large ribosomal subunit protein uL22 from Prochlorococcus marinus (strain MIT 9211).